The chain runs to 471 residues: ATP synthase subunit beta (471 aa).

157 to 164 (GGAGVGKT) provides a ligand contact to ATP.

It belongs to the ATPase alpha/beta chains family. As to quaternary structure, F-type ATPases have 2 components, CF(1) - the catalytic core - and CF(0) - the membrane proton channel. CF(1) has five subunits: alpha(3), beta(3), gamma(1), delta(1), epsilon(1). CF(0) has three main subunits: a(1), b(2) and c(9-12). The alpha and beta chains form an alternating ring which encloses part of the gamma chain. CF(1) is attached to CF(0) by a central stalk formed by the gamma and epsilon chains, while a peripheral stalk is formed by the delta and b chains.

It is found in the cell inner membrane. It carries out the reaction ATP + H2O + 4 H(+)(in) = ADP + phosphate + 5 H(+)(out). Produces ATP from ADP in the presence of a proton gradient across the membrane. The catalytic sites are hosted primarily by the beta subunits. This chain is ATP synthase subunit beta, found in Trichlorobacter lovleyi (strain ATCC BAA-1151 / DSM 17278 / SZ) (Geobacter lovleyi).